Reading from the N-terminus, the 1413-residue chain is Leucine-rich repeat receptor protein kinase MSL1 (1413 aa).

An N-terminal signal peptide occupies residues 1–23 (MAPMLSIASRSPSPALIAPHASA). N-linked (GlcNAc...) asparagine glycosylation is found at Asn-153 and Asn-192. LRR repeat units follow at residues 185 to 209 (FQSL…MVNL), 210 to 233 (QHLQ…LFDL), 235 to 257 (MLKV…IAHL), 258 to 281 (QQLT…LGSL), 282 to 304 (KNLE…SFSN), 306 to 329 (SRLL…IRAL), 330 to 353 (VNLV…LCQL), 354 to 377 (KNLQ…IGNL), 379 to 401 (QLEV…IGNL), 402 to 425 (EILE…VGEL), 427 to 449 (NLRQ…LGNC), 450 to 473 (KKLT…LADL), 475 to 497 (AVVL…IQNW), 498 to 518 (SNVS…PGLP), 519 to 542 (LHLV…ICQG), 543 to 565 (TFLQ…TFKG), 567 to 589 (KNLT…YLAL), 590 to 613 (LPLV…LWES), 615 to 636 (TILD…SIGK), 637 to 661 (LLSL…IGAL), 662 to 685 (RNLT…LFNC), 687 to 709 (NLVT…ISHL), 710 to 733 (TKLN…LCVA), 745 to 769 (VQHI…INNC), 771 to 793 (ILVE…LAEL), 794 to 817 (RNIT…PVPL), 818 to 841 (ASLQ…IGNI), 843 to 866 (PQIT…LLCK), and 868 to 890 (SLNH…CHED). N-linked (GlcNAc...) asparagine glycosylation is found at Asn-304 and Asn-317. Residues Asn-461, Asn-496, and Asn-499 are each glycosylated (N-linked (GlcNAc...) asparagine). N-linked (GlcNAc...) asparagine glycosylation is found at Asn-554, Asn-568, and Asn-601. N-linked (GlcNAc...) asparagine glycosylation is found at Asn-663 and Asn-697. Residue Asn-768 is glycosylated (N-linked (GlcNAc...) asparagine). The N-linked (GlcNAc...) asparagine glycan is linked to Asn-795. N-linked (GlcNAc...) asparagine glycans are attached at residues Asn-878, Asn-901, Asn-917, and Asn-928. LRR repeat units follow at residues 918-942 (FTKL…IARV) and 944-966 (SLYY…ICGM). The N-linked (GlcNAc...) asparagine glycan is linked to Asn-973. The chain crosses the membrane as a helical span at residues 1016–1036 (TICCIATAIVIVLVVILVVYL). The Protein kinase domain occupies 1107 to 1401 (FDGMHVVGDG…IEAMEYGPLV (295 aa)). ATP is bound by residues 1113-1121 (VGDGGFGTV) and Lys-1135. The Proton acceptor role is filled by Asp-1234.

It belongs to the protein kinase superfamily. Ser/Thr protein kinase family. Expressed in roots, leaves, shoots and spikelets.

The protein localises to the cell membrane. The enzyme catalyses L-seryl-[protein] + ATP = O-phospho-L-seryl-[protein] + ADP + H(+). It carries out the reaction L-threonyl-[protein] + ATP = O-phospho-L-threonyl-[protein] + ADP + H(+). Receptor-like kinase that may play a role male and female sporogenesis. The sequence is that of Leucine-rich repeat receptor protein kinase MSL1 from Oryza sativa subsp. japonica (Rice).